Here is a 470-residue protein sequence, read N- to C-terminus: Acetyl-CoA decarbonylase/synthase complex subunit gamma (470 aa).

A 4Fe-4S domain is found at 1–62 (MKVKSPLEVY…DPKVKKKLEE (62 aa)). The [4Fe-4S] cluster site is built by C18, C21, C26, and C43.

As to quaternary structure, heterodimer of delta and gamma chains. The ACDS complex is made up of alpha, epsilon, beta, gamma and delta chains with a probable stoichiometry of (alpha(2)epsilon(2))(4)-beta(8)-(gamma(1)delta(1))(8). It depends on corrinoid as a cofactor. Requires [4Fe-4S] cluster as cofactor.

It catalyses the reaction 5,6,7,8-tetrahydrosarcinapterin + methyl-Co(III)-[corrinoid Fe-S protein] = 5-methyltetrahydrosarcinapterin + Co(I)-[corrinoid Fe-S protein] + H(+). Its function is as follows. Part of a complex that catalyzes the reversible cleavage of acetyl-CoA, allowing autotrophic growth from CO(2). This Archaeoglobus fulgidus (strain ATCC 49558 / DSM 4304 / JCM 9628 / NBRC 100126 / VC-16) protein is Acetyl-CoA decarbonylase/synthase complex subunit gamma.